The following is a 603-amino-acid chain: NADH-ubiquinone oxidoreductase chain 5 (603 aa).

A run of 16 helical transmembrane segments spans residues 4–24, 38–58, 87–107, 122–142, 144–160, 171–191, 211–233, 241–261, 272–292, 301–320, 325–347, 370–390, 405–422, 457–477, 482–502, and 582–602; these read YATM…GALI, SIIA…MCLD, MTFI…SLWY, LIFL…QLFI, WEGV…WWYA, AILY…WFLL, TPLL…HPWL, TPVS…FLLI, LIQT…AVCA, IVAF…IGIN, AFLH…GSII, STSL…TGFY, NAWA…TSAY, LTIG…PMST, IPLY…LTAL, and GMIK…LLLI.

This sequence belongs to the complex I subunit 5 family. As to quaternary structure, core subunit of respiratory chain NADH dehydrogenase (Complex I) which is composed of 45 different subunits.

It is found in the mitochondrion inner membrane. It catalyses the reaction a ubiquinone + NADH + 5 H(+)(in) = a ubiquinol + NAD(+) + 4 H(+)(out). Its function is as follows. Core subunit of the mitochondrial membrane respiratory chain NADH dehydrogenase (Complex I) which catalyzes electron transfer from NADH through the respiratory chain, using ubiquinone as an electron acceptor. Essential for the catalytic activity and assembly of complex I. This chain is NADH-ubiquinone oxidoreductase chain 5 (MT-ND5), found in Pan troglodytes (Chimpanzee).